A 299-amino-acid polypeptide reads, in one-letter code: Recombination-associated protein RdgC (299 aa).

Belongs to the RdgC family.

The protein localises to the cytoplasm. It is found in the nucleoid. In terms of biological role, may be involved in recombination. This is Recombination-associated protein RdgC from Cupriavidus pinatubonensis (strain JMP 134 / LMG 1197) (Cupriavidus necator (strain JMP 134)).